The following is a 200-amino-acid chain: dTTP/UTP pyrophosphatase (200 aa).

The active-site Proton acceptor is Asp76.

This sequence belongs to the Maf family. YhdE subfamily. A divalent metal cation is required as a cofactor.

Its subcellular location is the cytoplasm. The enzyme catalyses dTTP + H2O = dTMP + diphosphate + H(+). It catalyses the reaction UTP + H2O = UMP + diphosphate + H(+). Its function is as follows. Nucleoside triphosphate pyrophosphatase that hydrolyzes dTTP and UTP. May have a dual role in cell division arrest and in preventing the incorporation of modified nucleotides into cellular nucleic acids. This Acetivibrio thermocellus (strain ATCC 27405 / DSM 1237 / JCM 9322 / NBRC 103400 / NCIMB 10682 / NRRL B-4536 / VPI 7372) (Clostridium thermocellum) protein is dTTP/UTP pyrophosphatase.